Reading from the N-terminus, the 225-residue chain is Thymidylate kinase (225 aa).

10–17 (GIDGAGKS) is an ATP binding site.

The protein belongs to the thymidylate kinase family.

The enzyme catalyses dTMP + ATP = dTDP + ADP. Phosphorylation of dTMP to form dTDP in both de novo and salvage pathways of dTTP synthesis. This chain is Thymidylate kinase, found in Polaromonas sp. (strain JS666 / ATCC BAA-500).